The following is a 101-amino-acid chain: Small ribosomal subunit protein bS18c (101 aa).

This sequence belongs to the bacterial ribosomal protein bS18 family. As to quaternary structure, part of the 30S ribosomal subunit.

It localises to the plastid. The protein resides in the chloroplast. The polypeptide is Small ribosomal subunit protein bS18c (Panax ginseng (Korean ginseng)).